Reading from the N-terminus, the 329-residue chain is Ketol-acid reductoisomerase (NADP(+)) (329 aa).

A KARI N-terminal Rossmann domain is found at 2 to 181 (VQKYYESDAD…GATRAVVFET (180 aa)). NADP(+) is bound by residues 25-28 (YGSQ), Arg-48, Ser-52, and 82-85 (DENQ). The active site involves His-107. Gly-133 is an NADP(+) binding site. In terms of domain architecture, KARI C-terminal knotted spans 182–327 (TFAEETETDL…AEIRGFMPQF (146 aa)). Asp-190, Glu-194, Glu-226, and Glu-230 together coordinate Mg(2+). Residue Ser-251 coordinates substrate.

The protein belongs to the ketol-acid reductoisomerase family. Mg(2+) is required as a cofactor.

It catalyses the reaction (2R)-2,3-dihydroxy-3-methylbutanoate + NADP(+) = (2S)-2-acetolactate + NADPH + H(+). The catalysed reaction is (2R,3R)-2,3-dihydroxy-3-methylpentanoate + NADP(+) = (S)-2-ethyl-2-hydroxy-3-oxobutanoate + NADPH + H(+). Its pathway is amino-acid biosynthesis; L-isoleucine biosynthesis; L-isoleucine from 2-oxobutanoate: step 2/4. It functions in the pathway amino-acid biosynthesis; L-valine biosynthesis; L-valine from pyruvate: step 2/4. In terms of biological role, involved in the biosynthesis of branched-chain amino acids (BCAA). Catalyzes an alkyl-migration followed by a ketol-acid reduction of (S)-2-acetolactate (S2AL) to yield (R)-2,3-dihydroxy-isovalerate. In the isomerase reaction, S2AL is rearranged via a Mg-dependent methyl migration to produce 3-hydroxy-3-methyl-2-ketobutyrate (HMKB). In the reductase reaction, this 2-ketoacid undergoes a metal-dependent reduction by NADPH to yield (R)-2,3-dihydroxy-isovalerate. In Methanoculleus marisnigri (strain ATCC 35101 / DSM 1498 / JR1), this protein is Ketol-acid reductoisomerase (NADP(+)).